The sequence spans 195 residues: dCTP deaminase (195 aa).

Residues 110–115, D128, 136–138, Y171, K178, and Q182 contribute to the dCTP site; these read RSSLAR and VLE. E138 serves as the catalytic Proton donor/acceptor. The span at 169–179 shows a compositional bias: basic and acidic residues; that stretch reads RPYSSRKDAKY. The tract at residues 169–195 is disordered; sequence RPYSSRKDAKYKNQQSAVASRIDEDKE.

Belongs to the dCTP deaminase family. In terms of assembly, homotrimer.

It carries out the reaction dCTP + H2O + H(+) = dUTP + NH4(+). Its pathway is pyrimidine metabolism; dUMP biosynthesis; dUMP from dCTP (dUTP route): step 1/2. In terms of biological role, catalyzes the deamination of dCTP to dUTP. This is dCTP deaminase from Haemophilus influenzae (strain 86-028NP).